The chain runs to 622 residues: Microtubule-associated protein 70-1 (622 aa).

Residues 1–27 (MSDVSADGGFLSAEQATTPVAIPTPYP) form a disordered region. Positions 66 to 365 (DPVKVELNRL…LAISDRAAKS (300 aa)) form a coiled coil. The required for targeting to microtubules stretch occupies residues 250–483 (ILDRMHRQKV…YSFNKACDET (234 aa)). 2 disordered regions span residues 388–512 (SSIS…TEDN) and 579–622 (AAMR…RSTQ). Composition is skewed to polar residues over residues 400 to 425 (SMSNGPSRRQSIGGSDNLQKFASNGF) and 432 to 453 (MRNSFTSNSTSVLKNAKGTSKS). Composition is skewed to basic and acidic residues over residues 479–501 (ACDETKESESPNTWKEDSEEKPP) and 579–591 (AAMRVDKDQDNRA). Residues 541–590 (DKDDAIEMLAKKVETLTKAMEVEAKKMRREVAAMEKEVAAMRVDKDQDNR) are a coiled coil. Over residues 594–605 (SSNTKPSSNTAQ) the composition is skewed to polar residues.

The protein belongs to the MAP70 family. In terms of assembly, interacts with MAP70.5 and itself.

Its subcellular location is the cytoplasm. The protein resides in the cytoskeleton. It is found in the phragmoplast. The protein localises to the spindle. In terms of biological role, plant-specific protein that interact with microtubules. In association with MAP70.5, is essential for the normal banding pattern of secondary cell wall and for the proper development of xylem tracheary elements and wood formation. This is Microtubule-associated protein 70-1 (MAP70.1) from Arabidopsis thaliana (Mouse-ear cress).